A 295-amino-acid polypeptide reads, in one-letter code: Acetaldehyde dehydrogenase (295 aa).

NAD(+) is bound at residue 11–14 (SGNI). The active-site Acyl-thioester intermediate is the Cys127. NAD(+) is bound by residues 158–166 (SAGPGTRSN) and Asn269.

Belongs to the acetaldehyde dehydrogenase family.

The enzyme catalyses acetaldehyde + NAD(+) + CoA = acetyl-CoA + NADH + H(+). The polypeptide is Acetaldehyde dehydrogenase (Brevibacillus brevis (strain 47 / JCM 6285 / NBRC 100599)).